We begin with the raw amino-acid sequence, 133 residues long: Salivary cystatin-L (133 aa).

A signal peptide spans 1–19 (MTSTFALVLLLGGMAVCVA). The 89-residue stretch at 30-118 (ANHQANPEFL…RTCTTVVFEN (89 aa)) folds into the Cystatin domain. 2 disulfides stabilise this stretch: cysteine 89/cysteine 100 and cysteine 111/cysteine 130.

This sequence belongs to the cystatin family. Monomer. Can form homodimers in vitro, but probably not in vivo. Homodimers are predicted to be inactive; dimerization disrupts the interaction with target proteases. In terms of tissue distribution, detected in saliva (at protein level). Detected in salivary gland and midgut.

It localises to the secreted. In terms of biological role, contributes to the suppression of the host's immune response to tick salivary proteins and is important for successful feeding on hosts. Inhibitor of cysteine proteinases. Inhibits host papain and cathepsin L (CTSL) (in vitro). Inhibits host cathepsin S (CTSS) (in vitro). Inhibits host CTSV and CTSC, but to a lesser degree (in vitro). Inhibits host immune responses via its inhibition of host cathepsins. Inhibits differentiation of host dendritic cells. Inhibits proliferation of host T-cells in response to antigen stimulus. Down-regulates IL1B production by host mast cells, and this then leads to impaired activation of IL1R1, resulting in decreased IL9 production. Inhibits host inflammatory reactions and recruitment of host neutrophils. Attenuates IFN-beta (IFNB1)-triggered JAK/STAT signaling pathway in mouse dendritic cells. Functionally, (Microbial infection) Down-regulates TLR2-mediated host responses to infection by Borrelia burgdorferi and the production of the chemokine CCL3 by host dendritic cells. Down-regulates host responses to infection by B.burgdorferi and the production of IFNB1 by host dendritic cells. The protein is Salivary cystatin-L of Ixodes scapularis (Black-legged tick).